Here is a 153-residue protein sequence, read N- to C-terminus: Probable inactive ribonuclease-like protein 13 (153 aa).

A signal peptide spans 1-22 (MAPDVAWLLVLPLVFRPTLVTG).

The protein belongs to the pancreatic ribonuclease family.

Its subcellular location is the secreted. Its function is as follows. Does not exhibit any ribonuclease activity. The polypeptide is Probable inactive ribonuclease-like protein 13 (Rnase13) (Mus musculus (Mouse)).